The chain runs to 525 residues: Peptide chain release factor 3 (525 aa).

The 268-residue stretch at Ala9–Gln276 folds into the tr-type G domain. Residues Ser18–Thr25, Asp86–His90, and Asn140–Asp143 each bind GTP.

Belongs to the TRAFAC class translation factor GTPase superfamily. Classic translation factor GTPase family. PrfC subfamily.

It localises to the cytoplasm. Its function is as follows. Increases the formation of ribosomal termination complexes and stimulates activities of RF-1 and RF-2. It binds guanine nucleotides and has strong preference for UGA stop codons. It may interact directly with the ribosome. The stimulation of RF-1 and RF-2 is significantly reduced by GTP and GDP, but not by GMP. In Francisella tularensis subsp. tularensis (strain WY96-3418), this protein is Peptide chain release factor 3.